Reading from the N-terminus, the 651-residue chain is J domain-containing protein required for chloroplast accumulation response 1 (651 aa).

Residues 1 to 17 (MQTLPSSETVLLGSNSA) show a composition bias toward polar residues. 5 disordered regions span residues 1–56 (MQTL…TRHS), 114–138 (GSRI…QFSL), 156–176 (LNKN…SKAD), 250–291 (KLGK…TDLK), and 308–526 (KPLD…IDEP). Phosphoserine is present on serine 56. The span at 126 to 137 (SSSGTSSPSQFS) shows a compositional bias: low complexity. Basic and acidic residues-rich tracts occupy residues 250 to 259 (KLGKNEEGDG), 281 to 291 (TKEEKTETDLK), 337 to 357 (IFHE…EVRK), 405 to 416 (VGKDGVKGKVSD), 441 to 456 (RAKE…DGSN), and 488 to 497 (QKKDSDRESM). Residues 532 to 562 (DVEDITQDENKMEEANKDAEEIKNIDAKIRK) adopt a coiled-coil conformation. The J domain maps to 586–651 (SGWKPVPLMD…WDHFNTLGPV (66 aa)).

In terms of tissue distribution, expressed in leaves and stems, but not in roots.

The protein localises to the cytoplasm. Its function is as follows. Required for chloroplast photorelocation movement; chloroplast accumulation upon low blue light and for chloroplast movement to the bottom of cells in darkness, by modulating chloroplast actin (Cp-actin) filaments distribution, appearance and disappearance. May mediate a slight resistance to aluminum in root hair cells. The polypeptide is J domain-containing protein required for chloroplast accumulation response 1 (JAC1) (Arabidopsis thaliana (Mouse-ear cress)).